Consider the following 103-residue polypeptide: Histone H4 (103 aa).

The segment covering M1 to G14 has biased composition (gly residues). Positions M1–R20 are disordered. Residue S2 is modified to N-acetylserine. An N6-acetyl-N6-methyllysine; alternate mark is found at K6 and K13. At K17 the chain carries N6-acetyllysine. A DNA-binding region spans residues K17–R21.

This sequence belongs to the histone H4 family. As to quaternary structure, the nucleosome is a histone octamer containing two molecules each of H2A, H2B, H3 and H4 assembled in one H3-H4 heterotetramer and two H2A-H2B heterodimers. The octamer wraps approximately 147 bp of DNA.

It is found in the nucleus. It localises to the chromosome. Its function is as follows. Core component of nucleosome. Nucleosomes wrap and compact DNA into chromatin, limiting DNA accessibility to the cellular machineries which require DNA as a template. Histones thereby play a central role in transcription regulation, DNA repair, DNA replication and chromosomal stability. DNA accessibility is regulated via a complex set of post-translational modifications of histones, also called histone code, and nucleosome remodeling. The sequence is that of Histone H4 from Mytilus chilensis (Chilean blue mussel).